The sequence spans 146 residues: Hemoglobin subunit beta (146 aa).

An N-acetylvaline modification is found at Val1. The 145-residue stretch at 2–146 (HLTDAEKAAI…VATALGHKYH (145 aa)) folds into the Globin domain. An N6-acetyllysine modification is found at Lys59. His63 contributes to the heme b binding site. Lys82 bears the N6-acetyllysine mark. His92 contacts heme b. Residue Cys93 is modified to S-nitrosocysteine. Lys144 carries the N6-acetyllysine modification.

Belongs to the globin family. Heterotetramer of two alpha chains and two beta chains. As to expression, red blood cells.

Its function is as follows. Involved in oxygen transport from the lung to the various peripheral tissues. In Ondatra zibethicus (Muskrat), this protein is Hemoglobin subunit beta (HBB).